The sequence spans 150 residues: MAEKFHILLLNGPNLNLLGTREPDKYGKTTLADIVSELETQAQALNVKFSHLQSNAEHVLIDTIHQARGNTDFILINPAAFTHTSVALRDALLAVSIPFIEIHLSNVHAREPFRHHSYLSDVAVGVICGLGADGYQYALQTAVKRLSTSN.

Catalysis depends on Tyr-26, which acts as the Proton acceptor. Substrate is bound by residues Asn-77, His-83, and Asp-90. His-103 (proton donor) is an active-site residue. Substrate is bound by residues 104–105 (LS) and Arg-114.

It belongs to the type-II 3-dehydroquinase family. In terms of assembly, homododecamer.

It carries out the reaction 3-dehydroquinate = 3-dehydroshikimate + H2O. It functions in the pathway metabolic intermediate biosynthesis; chorismate biosynthesis; chorismate from D-erythrose 4-phosphate and phosphoenolpyruvate: step 3/7. Its function is as follows. Catalyzes a trans-dehydration via an enolate intermediate. This is 3-dehydroquinate dehydratase from Pectobacterium carotovorum subsp. carotovorum (strain PC1).